Consider the following 258-residue polypeptide: Small ribosomal subunit protein mS23 (258 aa).

Residues 230–239 (KKNSTKQSWA) are compositionally biased toward polar residues. Residues 230–258 (KKNSTKQSWAEATEEKEEQDSAEPEELKL) form a disordered region. A compositionally biased stretch (acidic residues) spans 241 to 258 (ATEEKEEQDSAEPEELKL).

It belongs to the mitochondrion-specific ribosomal protein mS23 family. As to quaternary structure, component of the mitochondrial small ribosomal subunit.

It is found in the mitochondrion. The protein is Small ribosomal subunit protein mS23 (RSM25) of Eremothecium gossypii (strain ATCC 10895 / CBS 109.51 / FGSC 9923 / NRRL Y-1056) (Yeast).